Here is a 446-residue protein sequence, read N- to C-terminus: Nuclear envelope integral membrane protein 1 (446 aa).

The N-terminal stretch at 1-37 (MAGFMKYKSVSTTIETVRLKLILTAVLFLFPFSQTSG) is a signal peptide. N-linked (GlcNAc...) asparagine glycans are attached at residues N62, N118, and N129. The next 5 membrane-spanning stretches (helical) occupy residues 154–174 (IYLF…DVLS), 181–201 (YSAG…FIVY), 209–229 (PFYM…QLVF), 239–259 (HWHL…AVCY), and 269–289 (SINI…YAGI). A compositionally biased stretch (acidic residues) spans 410 to 431 (LFSTDEEDKEEEEDGWETEDDI). Residues 410 to 446 (LFSTDEEDKEEEEDGWETEDDIKPEVTSPRMNNTRGK) form a disordered region. A glycan (N-linked (GlcNAc...) asparagine) is linked at N441.

It belongs to the NEMP family.

The protein localises to the nucleus inner membrane. Its function is as follows. Contributes to nuclear envelope stiffness in germ cells. Involved in male and female fertility. Essential for normal erythropoiesis. Required for efficient nuclear envelope opening and enucleation during the late stages of erythroblast maturation. The sequence is that of Nuclear envelope integral membrane protein 1 from Danio rerio (Zebrafish).